The chain runs to 238 residues: uncharacterized protein (238 aa).

This is an uncharacterized protein from Ictaluridae (bullhead catfishes).